The chain runs to 168 residues: CS3 fimbrial subunit A (168 aa).

The first 22 residues, 1-22, serve as a signal peptide directing secretion; that stretch reads MLKIKYLLIGLSLSAMSSYSLA.

A longer minor form, starting at amino acid 15, has been detected by amino acid sequencing. This is probably due to alternative processing of the signal peptide.

The protein localises to the fimbrium. Its function is as follows. Fimbriae (also called pili), polar filaments radiating from the surface of the bacterium to a length of 0.5-1.5 micrometers and numbering 100-300 per cell, enable bacteria to colonize the epithelium of specific host organs. This is CS3 fimbrial subunit A from Escherichia coli.